A 271-amino-acid polypeptide reads, in one-letter code: ATP synthase subunit delta (271 aa).

Belongs to the ATPase delta chain family. In terms of assembly, F-type ATPases have 2 components, F(1) - the catalytic core - and F(0) - the membrane proton channel. F(1) has five subunits: alpha(3), beta(3), gamma(1), delta(1), epsilon(1). F(0) has three main subunits: a(1), b(2) and c(10-14). The alpha and beta chains form an alternating ring which encloses part of the gamma chain. F(1) is attached to F(0) by a central stalk formed by the gamma and epsilon chains, while a peripheral stalk is formed by the delta and b chains.

It localises to the cell membrane. F(1)F(0) ATP synthase produces ATP from ADP in the presence of a proton or sodium gradient. F-type ATPases consist of two structural domains, F(1) containing the extramembraneous catalytic core and F(0) containing the membrane proton channel, linked together by a central stalk and a peripheral stalk. During catalysis, ATP synthesis in the catalytic domain of F(1) is coupled via a rotary mechanism of the central stalk subunits to proton translocation. In terms of biological role, this protein is part of the stalk that links CF(0) to CF(1). It either transmits conformational changes from CF(0) to CF(1) or is implicated in proton conduction. This Beutenbergia cavernae (strain ATCC BAA-8 / DSM 12333 / CCUG 43141 / JCM 11478 / NBRC 16432 / NCIMB 13614 / HKI 0122) protein is ATP synthase subunit delta.